The sequence spans 506 residues: Sucrose transport protein SUT3 (506 aa).

Over 1-20 (MAVDMELDGGGDGKGKAPPQ) the chain is Cytoplasmic. Residues 21–41 (ISLSGLFLACMVAGGVQYGWA) form a helical membrane-spanning segment. The Extracellular segment spans residues 42-54 (LQLSLLTPYVQTL). Residues 55-75 (GIPHALTSVMWLCGPIAGLIV) traverse the membrane as a helical segment. Residues 76-94 (QPCVGLYSDKCTSSLGRRR) are Cytoplasmic-facing. Residues 95–115 (PFILTGCIIICISVIVIGFSS) form a helical membrane-spanning segment. Residues 116–135 (DIGYALGDTTEDCKVYRGPR) lie on the Extracellular side of the membrane. A helical membrane pass occupies residues 136–156 (YHAAAAFILGFWLLDFSNNTV). At 157-171 (QGPARALMADLSGRH) the chain is on the cytoplasmic side. A helical transmembrane segment spans residues 172 to 192 (GPSAANAIFCSWMALGNILGY). Residues 193-220 (SSGSTNDWHKWFPFLMTRACCEACANLK) are Extracellular-facing. A helical membrane pass occupies residues 221-241 (AAFLVAVVFLGLSTAVTMVFA). Residues 242–275 (REVALDPVAAAKRNEGEASGLLAVFKGMKNLPVG) are Cytoplasmic-facing. A helical transmembrane segment spans residues 276–296 (MPSVLIVTGLTWLSWFPFILF). Topologically, residues 297–327 (DTDWMGREIYHGRPDGSPAEVTAFQEGVRQG) are extracellular. A helical membrane pass occupies residues 328–348 (AFGLLLNSIVLGISSFLIEPM). Over 349–355 (CRRLGAR) the chain is Cytoplasmic. Residues 356-376 (AVWVMSSAVVCVAMAAVSVLS) traverse the membrane as a helical segment. The Extracellular portion of the chain corresponds to 377–404 (AWSLGDFGGSVQDAARAPAEEGGVRASA). Residues 405–425 (LALFVFLGLPFAVLCSVPFAV) traverse the membrane as a helical segment. At 426–441 (TAQLAASRGGGQGLCT) the chain is on the cytoplasmic side. The chain crosses the membrane as a helical span at residues 442-462 (GVLNISIVVPQMAIALGAGPW). The Extracellular portion of the chain corresponds to 463–470 (DELFGEGN). A helical membrane pass occupies residues 471–491 (IPAFAMASVFAAAAAAAGVVL). The Cytoplasmic segment spans residues 492–506 (LPKVSVRSVSMAGGH).

This sequence belongs to the glycoside-pentoside-hexuronide (GPH) cation symporter transporter (TC 2.A.2.4) family. As to quaternary structure, homodimer. Widely expressed. Highest expression in sink leaves and lowest in germinating seeds.

It localises to the cell membrane. It functions in the pathway glycan biosynthesis; sucrose metabolism. Functionally, responsible for the transport of sucrose into the cell, with the concomitant uptake of protons (symport system). May also transport other glucosides. This is Sucrose transport protein SUT3 (SUT3) from Oryza sativa subsp. japonica (Rice).